Reading from the N-terminus, the 348-residue chain is F(420)H(2) dehydrogenase subunit H (348 aa).

The next 8 helical transmembrane spans lie at glycine 20–leucine 40, isoleucine 93–isoleucine 113, isoleucine 127–alanine 147, proline 172–isoleucine 192, leucine 198–alanine 218, isoleucine 259–valine 279, glycine 286–isoleucine 306, and leucine 328–alanine 348.

Belongs to the complex I subunit 1 family. The FPO complex is composed of at least 13 different subunits. FpoA, FpoH, FpoJ, FpoK, FpoL, FpoM and FpoN proteins constitute the membrane sector of the complex.

The protein localises to the cell membrane. It carries out the reaction methanophenazine + reduced coenzyme F420-(gamma-L-Glu)(n) = dihydromethanophenazine + oxidized coenzyme F420-(gamma-L-Glu)(n) + H(+). Functionally, component of the F(420)H(2) dehydrogenase (FPO complex) which is part of the energy-conserving F(420)H(2):heterodisulfide oxidoreductase system. The membrane-bound electron transfer system of the complex plays an important role in the metabolism of methylotrophic methanogens when the organisms grow on methanol or methylamines. Catalyzes the oxidation of methanophenazine to dihydromethanophenazine. It shuttles electrons from F(420)H(2), via FAD and iron-sulfur (Fe-S) centers, to methanophenazine (an electron carrier in the membrane). It couples the redox reaction to proton translocation (for every two electrons transferred, two hydrogen ions are translocated across the cytoplasmic membrane), and thus conserves the redox energy in a proton gradient. The polypeptide is F(420)H(2) dehydrogenase subunit H (Methanosarcina acetivorans (strain ATCC 35395 / DSM 2834 / JCM 12185 / C2A)).